A 254-amino-acid chain; its full sequence is MSMEDPFFVVKGEVQKAVNTAQGLFQRWTELLQDPSIATREEIDWTTNELRNNLRSIEWDLEDLDETISIVEANPRKFNLDATELGIRKSFITSTRQVVREMKDQMSNSSMQALAERKNRQALLGESSSQSWSSGPDKYSRLDRELQLANSHFIEEQQAQQQLIVEQQDEQLELVSGSIGVLKNMSQRIGGELEEQAVMLDDFSHELDSTHSRLDNVMKKLAKVSHMTSDRRQWCAIIVLFVILLVVLVLFLVL.

The Cytoplasmic portion of the chain corresponds to 1 to 233; it reads MSMEDPFFVV…VSHMTSDRRQ (233 aa). Residues 46–72 adopt a coiled-coil conformation; the sequence is TTNELRNNLRSIEWDLEDLDETISIVE. The tract at residues 103–138 is disordered; the sequence is KDQMSNSSMQALAERKNRQALLGESSSQSWSSGPDK. A t-SNARE coiled-coil homology domain is found at 162 to 224; the sequence is QLIVEQQDEQ…DNVMKKLAKV (63 aa). The chain crosses the membrane as a helical; Anchor for type IV membrane protein span at residues 234-254; it reads WCAIIVLFVILLVVLVLFLVL.

The protein belongs to the syntaxin family.

It is found in the golgi apparatus membrane. Its subcellular location is the golgi apparatus. The protein localises to the trans-Golgi network membrane. It localises to the recycling endosome membrane. Functionally, SNARE promoting movement of transport vesicles to target membranes. Targets endosomes to the trans-Golgi network, and may therefore function in retrograde trafficking. Together with SNARE STX12, promotes movement of vesicles from endosomes to the cell membrane, and may therefore function in the endocytic recycling pathway. In Gallus gallus (Chicken), this protein is Syntaxin-6 (STX6).